The primary structure comprises 342 residues: Ketol-acid reductoisomerase (NADP(+)) (342 aa).

The KARI N-terminal Rossmann domain maps to 2–181; it reads VKVYYNGDIQ…GGARAGVLET (180 aa). NADP(+) contacts are provided by residues 25–28, Arg-48, Ser-52, and 82–85; these read YGSQ and DEQQ. His-107 is an active-site residue. Position 133 (Gly-133) interacts with NADP(+). A KARI C-terminal knotted domain is found at 182 to 327; sequence TFKEETETDL…RKLREMMPFV (146 aa). Mg(2+) is bound by residues Asp-190, Glu-194, Glu-226, and Glu-230. Substrate is bound at residue Ser-251.

It belongs to the ketol-acid reductoisomerase family. Mg(2+) is required as a cofactor.

It catalyses the reaction (2R)-2,3-dihydroxy-3-methylbutanoate + NADP(+) = (2S)-2-acetolactate + NADPH + H(+). The catalysed reaction is (2R,3R)-2,3-dihydroxy-3-methylpentanoate + NADP(+) = (S)-2-ethyl-2-hydroxy-3-oxobutanoate + NADPH + H(+). It participates in amino-acid biosynthesis; L-isoleucine biosynthesis; L-isoleucine from 2-oxobutanoate: step 2/4. Its pathway is amino-acid biosynthesis; L-valine biosynthesis; L-valine from pyruvate: step 2/4. Involved in the biosynthesis of branched-chain amino acids (BCAA). Catalyzes an alkyl-migration followed by a ketol-acid reduction of (S)-2-acetolactate (S2AL) to yield (R)-2,3-dihydroxy-isovalerate. In the isomerase reaction, S2AL is rearranged via a Mg-dependent methyl migration to produce 3-hydroxy-3-methyl-2-ketobutyrate (HMKB). In the reductase reaction, this 2-ketoacid undergoes a metal-dependent reduction by NADPH to yield (R)-2,3-dihydroxy-isovalerate. This chain is Ketol-acid reductoisomerase (NADP(+)), found in Bacillus pumilus (strain SAFR-032).